The sequence spans 827 residues: Periplasmic nitrate reductase (827 aa).

The segment at residues 1-34 (MSLTRRDFIKANAVAATAAAAGIATPAIAQPAKA) is a signal peptide (tat-type signal). Positions 36–92 (IRWDKGVCRFCGTGCAVLVGVQDGRVVATQGDPDSPVNRGLNCIKGYFLSKIMYGED) constitute a 4Fe-4S Mo/W bis-MGD-type domain. [4Fe-4S] cluster contacts are provided by Cys-43, Cys-46, Cys-50, and Cys-78. Residues Lys-80, Gln-148, Asn-173, Cys-177, 210–217 (WGSNMAEM), 241–245 (STFEH), 260–262 (QTD), Met-371, Gln-375, Asn-481, 507–508 (SD), Lys-530, Asp-557, and 717–726 (TGRVLEHWHS) contribute to the Mo-bis(molybdopterin guanine dinucleotide) site. Phe-793 is a substrate binding site. Positions 801 and 818 each coordinate Mo-bis(molybdopterin guanine dinucleotide).

Belongs to the prokaryotic molybdopterin-containing oxidoreductase family. NasA/NapA/NarB subfamily. Component of the periplasmic nitrate reductase NapAB complex composed of NapA and NapB. The cofactor is [4Fe-4S] cluster. Mo-bis(molybdopterin guanine dinucleotide) serves as cofactor. In terms of processing, predicted to be exported by the Tat system. The position of the signal peptide cleavage has not been experimentally proven.

It is found in the periplasm. The catalysed reaction is 2 Fe(II)-[cytochrome] + nitrate + 2 H(+) = 2 Fe(III)-[cytochrome] + nitrite + H2O. Functionally, catalytic subunit of the periplasmic nitrate reductase complex NapAB. Receives electrons from NapB and catalyzes the reduction of nitrate to nitrite. The protein is Periplasmic nitrate reductase of Paramagnetospirillum magneticum (strain ATCC 700264 / AMB-1) (Magnetospirillum magneticum).